We begin with the raw amino-acid sequence, 662 residues long: Probable actin-related protein 8 (662 aa).

Composition is skewed to basic and acidic residues over residues 50 to 59 and 67 to 77; these read AGEKDAKETE and TKQDDSKKSQV. Positions 50 to 92 are disordered; the sequence is AGEKDAKETESESANGDTKQDDSKKSQVEEEEDGIEESELGEE. The span at 78–89 shows a compositional bias: acidic residues; it reads EEEEDGIEESEL. 339-342 contributes to the ATP binding site; sequence DMGA.

This sequence belongs to the actin family. Component of the chromatin remodeling Ino80 complex. Exists as monomers and dimers, but the dimer is most probably the biologically relevant form required for stable interactions with histones that exploits the twofold symmetry of the nucleosome core.

It localises to the nucleus. In terms of biological role, probably involved in transcription regulation via its interaction with the INO80 complex, a chromatin remodeling complex. Exhibits low basal ATPase activity, and unable to polymerize. Strongly prefer nucleosomes and H3-H4 tetramers over H2A-H2B dimers, suggesting it may act as a nucleosome recognition module within the complex. The protein is Probable actin-related protein 8 of Schizosaccharomyces pombe (strain 972 / ATCC 24843) (Fission yeast).